Here is a 303-residue protein sequence, read N- to C-terminus: MKNLLSMEALTVHEIEHLLEQAAQFKHGKKATLKEQAFAVNMFFEPSTRTHTSFEVAEKKLGVEVVSFDAATSSMTKGETLYDTLLTMEAVGVNVAVIRHSEENYYAGLDKLNIAIVNGGDGCGEHPSQSLLDLFTIKEQFGTFQDLKVAIAGDIRHSRVANSNMKVLKRLGAKLFFSGPKEWFDDSYLEYGTYLPVDEIVEKVDVMMLLRVQHERHSGTEQFTKASYHEKFGLTVERAAKLKQDAIIMHPSPVNRDVEIADSLVESEKSRIVTQMTNGVFIRMAILESILKEQEMRAKVCTY.

Carbamoyl phosphate is bound by residues arginine 49 and threonine 50. Lysine 77 is a binding site for L-aspartate. Carbamoyl phosphate is bound by residues arginine 99, histidine 126, and glutamine 129. Residues arginine 159 and arginine 211 each coordinate L-aspartate. Serine 252 and proline 253 together coordinate carbamoyl phosphate.

The protein belongs to the aspartate/ornithine carbamoyltransferase superfamily. ATCase family. Heterododecamer (2C3:3R2) of six catalytic PyrB chains organized as two trimers (C3), and six regulatory PyrI chains organized as three dimers (R2).

It carries out the reaction carbamoyl phosphate + L-aspartate = N-carbamoyl-L-aspartate + phosphate + H(+). Its pathway is pyrimidine metabolism; UMP biosynthesis via de novo pathway; (S)-dihydroorotate from bicarbonate: step 2/3. In terms of biological role, catalyzes the condensation of carbamoyl phosphate and aspartate to form carbamoyl aspartate and inorganic phosphate, the committed step in the de novo pyrimidine nucleotide biosynthesis pathway. The polypeptide is Aspartate carbamoyltransferase catalytic subunit (Listeria innocua serovar 6a (strain ATCC BAA-680 / CLIP 11262)).